The chain runs to 445 residues: Histidinol dehydrogenase (445 aa).

3 residues coordinate NAD(+): tyrosine 138, glutamine 199, and asparagine 222. Positions 245, 267, and 270 each coordinate substrate. Zn(2+)-binding residues include glutamine 267 and histidine 270. Catalysis depends on proton acceptor residues glutamate 335 and histidine 336. Substrate is bound by residues histidine 336, aspartate 369, glutamate 423, and histidine 428. Position 369 (aspartate 369) interacts with Zn(2+). Residue histidine 428 coordinates Zn(2+).

Belongs to the histidinol dehydrogenase family. The cofactor is Zn(2+).

It carries out the reaction L-histidinol + 2 NAD(+) + H2O = L-histidine + 2 NADH + 3 H(+). It functions in the pathway amino-acid biosynthesis; L-histidine biosynthesis; L-histidine from 5-phospho-alpha-D-ribose 1-diphosphate: step 9/9. Functionally, catalyzes the sequential NAD-dependent oxidations of L-histidinol to L-histidinaldehyde and then to L-histidine. This is Histidinol dehydrogenase from Burkholderia pseudomallei (strain 1710b).